We begin with the raw amino-acid sequence, 276 residues long: Putative serine/threonine-protein kinase R436 (276 aa).

The Protein kinase domain maps to 6–266 (YSLDKLIQNR…IKQKLNHFKT (261 aa)). ATP contacts are provided by residues 12–20 (IQNRKSKRI) and Lys35. Residue Asp132 is the Proton acceptor of the active site.

This sequence belongs to the protein kinase superfamily. Ser/Thr protein kinase family.

It catalyses the reaction L-seryl-[protein] + ATP = O-phospho-L-seryl-[protein] + ADP + H(+). The enzyme catalyses L-threonyl-[protein] + ATP = O-phospho-L-threonyl-[protein] + ADP + H(+). The sequence is that of Putative serine/threonine-protein kinase R436 from Acanthamoeba polyphaga (Amoeba).